Here is a 333-residue protein sequence, read N- to C-terminus: Protoheme IX farnesyltransferase (333 aa).

A run of 7 helical transmembrane segments spans residues 64–84, 110–130, 133–153, 161–181, 189–209, 246–266, and 287–307; these read LICT…LNCL, TVFL…VSGV, LAAG…TVIL, IVFG…AATG, WLFG…AILL, IMGV…LLPF, and AKSL…LLLI.

This sequence belongs to the UbiA prenyltransferase family. Protoheme IX farnesyltransferase subfamily.

It is found in the cell inner membrane. The enzyme catalyses heme b + (2E,6E)-farnesyl diphosphate + H2O = Fe(II)-heme o + diphosphate. It functions in the pathway porphyrin-containing compound metabolism; heme O biosynthesis; heme O from protoheme: step 1/1. In terms of biological role, converts heme B (protoheme IX) to heme O by substitution of the vinyl group on carbon 2 of heme B porphyrin ring with a hydroxyethyl farnesyl side group. The sequence is that of Protoheme IX farnesyltransferase from Prochlorococcus marinus (strain AS9601).